A 269-amino-acid chain; its full sequence is 3-methyl-2-oxobutanoate hydroxymethyltransferase (269 aa).

Residues Asp43 and Asp82 each coordinate Mg(2+). Residues 43-44 (DS), Asp82, and Lys110 each bind 3-methyl-2-oxobutanoate. Glu112 serves as a coordination point for Mg(2+). The Proton acceptor role is filled by Glu179.

This sequence belongs to the PanB family. As to quaternary structure, homodecamer; pentamer of dimers. Requires Mg(2+) as cofactor.

It localises to the cytoplasm. The catalysed reaction is 3-methyl-2-oxobutanoate + (6R)-5,10-methylene-5,6,7,8-tetrahydrofolate + H2O = 2-dehydropantoate + (6S)-5,6,7,8-tetrahydrofolate. Its pathway is cofactor biosynthesis; (R)-pantothenate biosynthesis; (R)-pantoate from 3-methyl-2-oxobutanoate: step 1/2. Its function is as follows. Catalyzes the reversible reaction in which hydroxymethyl group from 5,10-methylenetetrahydrofolate is transferred onto alpha-ketoisovalerate to form ketopantoate. The sequence is that of 3-methyl-2-oxobutanoate hydroxymethyltransferase from Acinetobacter baylyi (strain ATCC 33305 / BD413 / ADP1).